Reading from the N-terminus, the 507-residue chain is UDP-N-acetylhexosamine pyrophosphorylase-like protein 1 (507 aa).

The Substrate binding motif lies at 111 to 114; sequence LAGG. UTP contacts are provided by residues 111-114, Lys-125, Gln-199, and Gly-225; that span reads LAGG. Asn-226 lines the substrate pocket. Asp-256 is a binding site for UTP. The Substrate binding motif lies at 306-307; that stretch reads EY. Lys-380 contacts UTP. Lys-410 contributes to the substrate binding site.

Belongs to the UDPGP type 1 family.

The chain is UDP-N-acetylhexosamine pyrophosphorylase-like protein 1 (Uap1l1) from Mus musculus (Mouse).